A 234-amino-acid chain; its full sequence is Cyclo(L-leucyl-L-leucyl) synthase (234 aa).

Ser-33 (nucleophile) is an active-site residue. Residues Asn-36, 179 to 183 (YIFAE), Tyr-203, and 208 to 209 (SI) each bind substrate.

Belongs to the CDPS family.

It catalyses the reaction 2 L-leucyl-tRNA(Leu) = cyclo(L-leucyl-L-leucyl) + 2 tRNA(Leu) + 2 H(+). Its function is as follows. It uses activated amino acids in the form of aminoacyl-tRNAs (aa-tRNAs) as substrates to catalyze the ATP-independent formation of cyclodipeptides which are intermediates in diketopiperazine (DKP) biosynthetic pathways. Catalyzes the formation of cyclo(L-Leu-L-Leu) (cLL) from L-leucyl-tRNA(Leu). Can incorporate various nonpolar residues, such as L-phenylalanine, L-leucine and L-methionine, into cyclodipeptides. The polypeptide is Cyclo(L-leucyl-L-leucyl) synthase (Photorhabdus laumondii subsp. laumondii (strain DSM 15139 / CIP 105565 / TT01) (Photorhabdus luminescens subsp. laumondii)).